A 76-amino-acid polypeptide reads, in one-letter code: UPF0248 protein MmarC7_1289 (76 aa).

This sequence belongs to the UPF0248 family.

This chain is UPF0248 protein MmarC7_1289, found in Methanococcus maripaludis (strain C7 / ATCC BAA-1331).